A 164-amino-acid chain; its full sequence is ATP synthase subunit b 1 (164 aa).

The chain crosses the membrane as a helical span at residues 8 to 28 (AETWVAVGFAILMVVFVYFGV).

Belongs to the ATPase B chain family. As to quaternary structure, F-type ATPases have 2 components, F(1) - the catalytic core - and F(0) - the membrane proton channel. F(1) has five subunits: alpha(3), beta(3), gamma(1), delta(1), epsilon(1). F(0) has three main subunits: a(1), b(2) and c(10-14). The alpha and beta chains form an alternating ring which encloses part of the gamma chain. F(1) is attached to F(0) by a central stalk formed by the gamma and epsilon chains, while a peripheral stalk is formed by the delta and b chains.

Its subcellular location is the cell inner membrane. Functionally, f(1)F(0) ATP synthase produces ATP from ADP in the presence of a proton or sodium gradient. F-type ATPases consist of two structural domains, F(1) containing the extramembraneous catalytic core and F(0) containing the membrane proton channel, linked together by a central stalk and a peripheral stalk. During catalysis, ATP synthesis in the catalytic domain of F(1) is coupled via a rotary mechanism of the central stalk subunits to proton translocation. In terms of biological role, component of the F(0) channel, it forms part of the peripheral stalk, linking F(1) to F(0). The chain is ATP synthase subunit b 1 from Rhodopseudomonas palustris (strain BisA53).